A 149-amino-acid chain; its full sequence is MSMSTSTELFAHHWAFAVFLLGAFGLCALMLLGAFFLGGRAKARAKHVPYESGIDSVGSARLRMSAKFYLVAMFFVIFDVEALFLYAWSVSIKESGWLGFIEASIFILVLLAGLFYLVRIGALNWTPSRSSRQVSKPSVVININNSHPQ.

Helical transmembrane passes span 16-36 (FAVF…GAFF), 68-88 (FYLV…LYAW), and 98-118 (LGFI…FYLV).

This sequence belongs to the complex I subunit 3 family. In terms of assembly, NDH-1 is composed of 13 different subunits. Subunits NuoA, H, J, K, L, M, N constitute the membrane sector of the complex.

It is found in the cell inner membrane. It carries out the reaction a quinone + NADH + 5 H(+)(in) = a quinol + NAD(+) + 4 H(+)(out). In terms of biological role, NDH-1 shuttles electrons from NADH, via FMN and iron-sulfur (Fe-S) centers, to quinones in the respiratory chain. The immediate electron acceptor for the enzyme in this species is believed to be ubiquinone. Couples the redox reaction to proton translocation (for every two electrons transferred, four hydrogen ions are translocated across the cytoplasmic membrane), and thus conserves the redox energy in a proton gradient. This is NADH-quinone oxidoreductase subunit A from Photorhabdus laumondii subsp. laumondii (strain DSM 15139 / CIP 105565 / TT01) (Photorhabdus luminescens subsp. laumondii).